The sequence spans 342 residues: S-adenosylmethionine:tRNA ribosyltransferase-isomerase (342 aa).

The protein belongs to the QueA family. As to quaternary structure, monomer.

The protein localises to the cytoplasm. The catalysed reaction is 7-aminomethyl-7-carbaguanosine(34) in tRNA + S-adenosyl-L-methionine = epoxyqueuosine(34) in tRNA + adenine + L-methionine + 2 H(+). It functions in the pathway tRNA modification; tRNA-queuosine biosynthesis. In terms of biological role, transfers and isomerizes the ribose moiety from AdoMet to the 7-aminomethyl group of 7-deazaguanine (preQ1-tRNA) to give epoxyqueuosine (oQ-tRNA). This chain is S-adenosylmethionine:tRNA ribosyltransferase-isomerase, found in Listeria monocytogenes serotype 4b (strain CLIP80459).